We begin with the raw amino-acid sequence, 447 residues long: Chromosomal replication initiator protein DnaA (447 aa).

The segment at 1–70 (MQDFWSKAMD…EEILSEQLGE (70 aa)) is domain I, interacts with DnaA modulators. Residues 70–110 (EPVTLLFAADPALEKPVASKTQTVTPVQSGGETGDQENFHS) form a domain II region. The segment at 87–109 (ASKTQTVTPVQSGGETGDQENFH) is disordered. The segment covering 88–99 (SKTQTVTPVQSG) has biased composition (polar residues). Residues 111-327 (GLDPRYTFDS…GALIRVSAYA (217 aa)) are domain III, AAA+ region. 4 residues coordinate ATP: G155, G157, K158, and T159. Residues 328–447 (SLTGKPITMA…LASLKSMLQK (120 aa)) are domain IV, binds dsDNA.

This sequence belongs to the DnaA family. In terms of assembly, oligomerizes as a right-handed, spiral filament on DNA at oriC.

The protein localises to the cytoplasm. Its function is as follows. Plays an essential role in the initiation and regulation of chromosomal replication. ATP-DnaA binds to the origin of replication (oriC) to initiate formation of the DNA replication initiation complex once per cell cycle. Binds the DnaA box (a 9 base pair repeat at the origin) and separates the double-stranded (ds)DNA. Forms a right-handed helical filament on oriC DNA; dsDNA binds to the exterior of the filament while single-stranded (ss)DNA is stabiized in the filament's interior. The ATP-DnaA-oriC complex binds and stabilizes one strand of the AT-rich DNA unwinding element (DUE), permitting loading of DNA polymerase. After initiation quickly degrades to an ADP-DnaA complex that is not apt for DNA replication. Binds acidic phospholipids. This chain is Chromosomal replication initiator protein DnaA, found in Magnetococcus marinus (strain ATCC BAA-1437 / JCM 17883 / MC-1).